We begin with the raw amino-acid sequence, 271 residues long: Tryptophan synthase alpha chain (271 aa).

Active-site proton acceptor residues include Glu-49 and Asp-60.

Belongs to the TrpA family. Tetramer of two alpha and two beta chains.

The enzyme catalyses (1S,2R)-1-C-(indol-3-yl)glycerol 3-phosphate + L-serine = D-glyceraldehyde 3-phosphate + L-tryptophan + H2O. Its pathway is amino-acid biosynthesis; L-tryptophan biosynthesis; L-tryptophan from chorismate: step 5/5. Functionally, the alpha subunit is responsible for the aldol cleavage of indoleglycerol phosphate to indole and glyceraldehyde 3-phosphate. The sequence is that of Tryptophan synthase alpha chain from Blochmanniella floridana.